Reading from the N-terminus, the 100-residue chain is Putative exopolysaccharide production repressor protein y4xQ (100 aa).

The next 2 membrane-spanning stretches (helical) occupy residues 9–29 (ILWL…GSIS) and 35–55 (TMVG…FLLW). The segment at 66 to 100 (TTGQFHGEEQPGDPRIAGTHGRTDGDPCFEDEDSR) is disordered.

It to Rhizobium exopolysaccharide production repressor protein (ExoX).

It is found in the cell membrane. Functionally, could be involved in the inhibition of exopolysaccharide synthesis (EPS) and nodulation ability (nod). This is Putative exopolysaccharide production repressor protein y4xQ from Sinorhizobium fredii (strain NBRC 101917 / NGR234).